The sequence spans 439 residues: Xylose isomerase (439 aa).

Catalysis depends on residues His-99 and Asp-102. Mg(2+) contacts are provided by Glu-230, Glu-266, His-269, Asp-294, Asp-305, Asp-307, and Asp-337.

It belongs to the xylose isomerase family. In terms of assembly, homotetramer. Requires Mg(2+) as cofactor.

Its subcellular location is the cytoplasm. The enzyme catalyses alpha-D-xylose = alpha-D-xylulofuranose. This is Xylose isomerase from Shouchella clausii (strain KSM-K16) (Alkalihalobacillus clausii).